The primary structure comprises 253 residues: Large ribosomal subunit protein uL1m (253 aa).

The transit peptide at 1–81 (MSSLIALGKR…SIALKSNRRA (81 aa)) directs the protein to the mitochondrion.

Belongs to the universal ribosomal protein uL1 family. In terms of assembly, component of the mitochondrial large ribosomal subunit (mt-LSU). Mature yeast 74S mitochondrial ribosomes consist of a small (37S) and a large (54S) subunit. The 37S small subunit contains a 15S ribosomal RNA (15S mt-rRNA) and at least 32 different proteins. The 54S large subunit contains a 21S rRNA (21S mt-rRNA) and at least 45 different proteins.

The protein localises to the mitochondrion. Functionally, component of the mitochondrial ribosome (mitoribosome), a dedicated translation machinery responsible for the synthesis of mitochondrial genome-encoded proteins, including at least some of the essential transmembrane subunits of the mitochondrial respiratory chain. The mitoribosomes are attached to the mitochondrial inner membrane and translation products are cotranslationally integrated into the membrane. The sequence is that of Large ribosomal subunit protein uL1m (mrpl1) from Schizosaccharomyces pombe (strain 972 / ATCC 24843) (Fission yeast).